A 562-amino-acid chain; its full sequence is Phosphoglucomutase-1 (562 aa).

Residue Met1 is modified to N-acetylmethionine. Position 16 is an N6-acetyllysine (Lys16). Residue Arg23 participates in alpha-D-glucose 1,6-bisphosphate binding. Residue Thr115 is modified to Phosphothreonine. Ser117 is an alpha-D-glucose 1,6-bisphosphate binding site. The Phosphoserine intermediate role is filled by Ser117. Ser117 serves as a coordination point for Mg(2+). Phosphoserine occurs at positions 117 and 134. Position 185 is a phosphothreonine (Thr185). Phosphoserine is present on residues Ser201, Ser206, and Ser213. Residues Asp288, Asp290, and Asp292 each coordinate Mg(2+). Residues Asp292 and Arg293 each contribute to the alpha-D-glucose 1,6-bisphosphate site. N6-acetyllysine is present on Lys349. Tyr353 carries the phosphotyrosine modification. Thr357 serves as a coordination point for alpha-D-glucose 1,6-bisphosphate. Position 369 is a phosphoserine (Ser369). Positions 376, 378, and 389 each coordinate alpha-D-glucose 1,6-bisphosphate. Phosphoserine is present on Ser378. The residue at position 419 (Lys419) is an N6-succinyllysine. At Thr467 the chain carries Phosphothreonine; by PAK1. Ser477, Ser485, and Ser505 each carry phosphoserine. Thr507 carries the phosphothreonine modification. Residues Ser509 and Ser541 each carry the phosphoserine modification.

The protein belongs to the phosphohexose mutase family. As to quaternary structure, monomer. It depends on Mg(2+) as a cofactor. Post-translationally, phosphorylation at Thr-467 by PAK1 significantly enhances enzymatic activity.

The protein resides in the cytoplasm. The catalysed reaction is alpha-D-glucose 1-phosphate = alpha-D-glucose 6-phosphate. It carries out the reaction O-phospho-L-seryl-[protein] + alpha-D-glucose 1-phosphate = alpha-D-glucose 1,6-bisphosphate + L-seryl-[protein]. The enzyme catalyses alpha-D-glucose 1,6-bisphosphate + L-seryl-[protein] = O-phospho-L-seryl-[protein] + alpha-D-glucose 6-phosphate. Its activity is regulated as follows. Glucose-1,6-bisphosphate enhances phosphorylation of the active site Ser-117, and thereby increases enzyme activity. Catalyzes the reversible isomerization of alpha-D-glucose 1-phosphate to alpha-D-glucose 6-phosphate. The mechanism proceeds via the intermediate compound alpha-D-glucose 1,6-bisphosphate. This enzyme participates in both the breakdown and synthesis of glucose. This chain is Phosphoglucomutase-1 (PGM1), found in Homo sapiens (Human).